A 945-amino-acid chain; its full sequence is Isoleucine--tRNA ligase (945 aa).

Residues 66-76 (PYANGDIHLGH) carry the 'HIGH' region motif. Residue Glu-581 participates in L-isoleucyl-5'-AMP binding. A 'KMSKS' region motif is present at residues 622 to 626 (KMSKS). Lys-625 is a binding site for ATP. 4 residues coordinate Zn(2+): Cys-908, Cys-911, Cys-928, and Cys-931.

Belongs to the class-I aminoacyl-tRNA synthetase family. IleS type 1 subfamily. In terms of assembly, monomer. It depends on Zn(2+) as a cofactor.

The protein resides in the cytoplasm. The catalysed reaction is tRNA(Ile) + L-isoleucine + ATP = L-isoleucyl-tRNA(Ile) + AMP + diphosphate. Its function is as follows. Catalyzes the attachment of isoleucine to tRNA(Ile). As IleRS can inadvertently accommodate and process structurally similar amino acids such as valine, to avoid such errors it has two additional distinct tRNA(Ile)-dependent editing activities. One activity is designated as 'pretransfer' editing and involves the hydrolysis of activated Val-AMP. The other activity is designated 'posttransfer' editing and involves deacylation of mischarged Val-tRNA(Ile). In Burkholderia cenocepacia (strain ATCC BAA-245 / DSM 16553 / LMG 16656 / NCTC 13227 / J2315 / CF5610) (Burkholderia cepacia (strain J2315)), this protein is Isoleucine--tRNA ligase.